An 862-amino-acid polypeptide reads, in one-letter code: Protein kintoun (862 aa).

Disordered stretches follow at residues 208–229 (KLLP…RTTK), 564–602 (TKRE…KKER), 626–670 (GEGA…STMP), and 743–854 (RREV…QFKS). A compositionally biased stretch (basic and acidic residues) spans 564–586 (TKREEHGEPECDEKDGSEAEKAR). Basic residues predominate over residues 587-601 (TLQKAKRNSRKKKKE). 2 stretches are compositionally biased toward basic and acidic residues: residues 748–757 (RRADARRMSE) and 766–785 (KDAH…HDEK).

Belongs to the PIH1 family. Kintoun subfamily.

It localises to the cytoplasm. Required for cytoplasmic pre-assembly of axonemal dyneins, thereby playing a central role in motility in cilia and flagella. Involved in pre-assembly of dynein arm complexes in the cytoplasm before intraflagellar transport loads them for the ciliary compartment. The chain is Protein kintoun from Anopheles gambiae (African malaria mosquito).